The following is a 122-amino-acid chain: Large ribosomal subunit protein uL14c (122 aa).

Belongs to the universal ribosomal protein uL14 family. Part of the 50S ribosomal subunit.

It is found in the plastid. The protein resides in the chloroplast. Binds to 23S rRNA. The sequence is that of Large ribosomal subunit protein uL14c from Chlamydomonas reinhardtii (Chlamydomonas smithii).